A 157-amino-acid chain; its full sequence is Histidine-containing phosphotransfer protein 5 (157 aa).

Met1 carries the N-acetylmethionine modification. One can recognise an HPt domain in the interval 41 to 148 (TPDFVAEVVS…NLEKQILQAG (108 aa)). His83 carries the phosphohistidine modification.

Interacts with the B-type response regulators ARR1 and ARR2. Binds to AHK2, AHK3, AHK4 and AHK5. Post-translationally, two-component system major event consists of a His-to-Asp phosphorelay between a sensor histidine kinase (HK) and a response regulator (RR). In plants, the His-to-Asp phosphorelay involves an additional intermediate named Histidine-containing phosphotransfer protein (HPt). This multistep phosphorelay consists of a His-Asp-His-Asp sequential transfer of a phosphate group between first a His and an Asp of the HK protein, followed by the transfer to a conserved His of the HPt protein and finally the transfer to an Asp in the receiver domain of the RR protein. In terms of tissue distribution, expressed in the whole plant.

The protein resides in the cytoplasm. Its subcellular location is the cytosol. It is found in the nucleus. Functionally, functions as a two-component phosphorelay mediator between cytokinin sensor histidine kinases and response regulators (B-type ARRs). Plays an important role in propagating cytokinin signal transduction through the multistep His-to-Asp phosphorelay. This Arabidopsis thaliana (Mouse-ear cress) protein is Histidine-containing phosphotransfer protein 5 (AHP5).